Reading from the N-terminus, the 357-residue chain is GTPase Obg (357 aa).

In terms of domain architecture, Obg spans Met-1–Ile-158. Positions Ala-159 to Glu-345 constitute an OBG-type G domain. GTP-binding positions include Gly-165 to Ser-172, Phe-190 to Thr-194, Asp-212 to Gly-215, Thr-280 to Asp-283, and Ser-326 to Val-328. Residues Ser-172 and Thr-192 each coordinate Mg(2+).

The protein belongs to the TRAFAC class OBG-HflX-like GTPase superfamily. OBG GTPase family. As to quaternary structure, monomer. Requires Mg(2+) as cofactor.

The protein resides in the cytoplasm. An essential GTPase which binds GTP, GDP and possibly (p)ppGpp with moderate affinity, with high nucleotide exchange rates and a fairly low GTP hydrolysis rate. Plays a role in control of the cell cycle, stress response, ribosome biogenesis and in those bacteria that undergo differentiation, in morphogenesis control. The polypeptide is GTPase Obg (Nautilia profundicola (strain ATCC BAA-1463 / DSM 18972 / AmH)).